Here is an 859-residue protein sequence, read N- to C-terminus: Homeobox-leucine zipper protein HOX32 (859 aa).

The tract at residues 7–31 (AAVHGVGRQDRSSPGGGGAPQVDTG) is disordered. Residues 29 to 92 (DTGKYVRYTP…NRRCREKQRK (64 aa)) constitute a DNA-binding region (homeobox). Residues 100–129 (VNRKLTAMNKLLMEENDRLQKQVSRLVYEN) adopt a coiled-coil conformation. Positions 146 to 164 (TSCESVVTSGQHHQQQNPA) are enriched in polar residues. The disordered stretch occupies residues 146-172 (TSCESVVTSGQHHQQQNPAATRPQRDA). Residues 171–393 (DANNPAGLLA…LRHIRQIAHE (223 aa)) enclose the START domain.

The protein belongs to the HD-ZIP homeobox family. Class III subfamily. In terms of tissue distribution, expressed in seedlings, roots, stems, leaf sheaths and blades and panicles.

The protein localises to the nucleus. Probable transcription factor. In Oryza sativa subsp. indica (Rice), this protein is Homeobox-leucine zipper protein HOX32 (HOX32).